The chain runs to 59 residues: Large ribosomal subunit protein bL32 (59 aa).

The span at 1–19 (MPVPKRRMSRSNTRSRRAQ) shows a compositional bias: basic residues. A disordered region spans residues 1–20 (MPVPKRRMSRSNTRSRRAQW).

This sequence belongs to the bacterial ribosomal protein bL32 family.

In Acidothermus cellulolyticus (strain ATCC 43068 / DSM 8971 / 11B), this protein is Large ribosomal subunit protein bL32.